A 202-amino-acid polypeptide reads, in one-letter code: Peroxynitrite isomerase (202 aa).

Residues 21-27 (GEWEGRG) carry the GXWXGXG motif. H193 serves as a coordination point for heme b.

The protein belongs to the nitrobindin family. Homodimer. Requires heme b as cofactor.

It catalyses the reaction peroxynitrite = nitrate. It participates in nitrogen metabolism. Functionally, heme-binding protein able to scavenge peroxynitrite and to protect free L-tyrosine against peroxynitrite-mediated nitration, by acting as a peroxynitrite isomerase that converts peroxynitrite to nitrate. Therefore, this protein likely plays a role in peroxynitrite sensing and in the detoxification of reactive nitrogen and oxygen species (RNS and ROS, respectively). Is able to bind nitric oxide (NO) in vitro, but may act as a sensor of peroxynitrite levels in vivo. The protein is Peroxynitrite isomerase of Pseudarthrobacter chlorophenolicus (strain ATCC 700700 / DSM 12829 / CIP 107037 / JCM 12360 / KCTC 9906 / NCIMB 13794 / A6) (Arthrobacter chlorophenolicus).